Here is a 480-residue protein sequence, read N- to C-terminus: Reticulophagy regulator 1 (480 aa).

Positions 1–10 (MASPAPEEHA) are enriched in basic and acidic residues. The tract at residues 1–41 (MASPAPEEHATQGCPATEEQEPRPGVPGEEAGPEGAGPQVE) is disordered. Topologically, residues 1-43 (MASPAPEEHATQGCPATEEQEPRPGVPGEEAGPEGAGPQVEEA) are cytoplasmic. A helical membrane pass occupies residues 44 to 64 (AGRVAAALTWLLGEPVLWLGW). The Lumenal segment spans residues 65–78 (RADELLSWKRPLRS). The segment at 67-216 (DELLSWKRPL…LLFAFLCPLF (150 aa)) is reticulon homology domain. The chain crosses the membrane as a helical span at residues 79 to 99 (LLAFLGANLLFWFLALTPWRV). Over 100-101 (YH) the chain is Cytoplasmic. Residues 102-122 (LISVMILGRVIMQIIKDMVLS) form a helical membrane-spanning segment. Over 123–191 (RARGAQLWRS…LVCSVCTFFT (69 aa)) the chain is Lumenal. S132 carries the phosphoserine modification. S134 carries the phosphoserine; by CAMK2B modification. S136 bears the Phosphoserine mark. The chain crosses the membrane as a helical span at residues 192–212 (ILGSYIPGVILSYLLLLFAFL). The Cytoplasmic segment spans residues 213-480 (CPLFKCNDIG…GFLSNLLGGH (268 aa)). Polar residues predominate over residues 302–313 (FNLSEGYTPQTD). The tract at residues 302–348 (FNLSEGYTPQTDTSDDLDRPSEEVFSRDLSDFPSLENGAGTNDEDEL) is disordered. Residues 317-331 (DLDRPSEEVFSRDLS) show a composition bias toward basic and acidic residues. The short motif at 436–441 (DDFELL) is the LIR motif element. Residues 450–480 (ESELGLTQDQGAEAQQSKKSSGFLSNLLGGH) are disordered. Positions 454 to 473 (GLTQDQGAEAQQSKKSSGFL) are enriched in polar residues.

The protein belongs to the RETREG family. In terms of assembly, homooligomer; oligomerization is enhanced following endoplasmic reticulum stress and is mediated by the reticulon homology domain. Interacts with ATG8 family modifier proteins MAP1LC3A, MAP1LC3B, GABARAP, GABARAPL1 and GABARAPL2. Phosphorylation at Ser-134 by CAMK2B enhances oligomerization and membrane scission and reticulophagy activity.

Its subcellular location is the golgi apparatus. It is found in the cis-Golgi network membrane. It localises to the endoplasmic reticulum membrane. Functionally, endoplasmic reticulum (ER)-anchored autophagy regulator which mediates ER delivery into lysosomes through sequestration into autophagosomes. Promotes membrane remodeling and ER scission via its membrane bending capacity and targets the fragments into autophagosomes via interaction with ATG8 family proteins. Active under basal conditions. Required for collagen quality control in a LIR motif-dependent manner. Required for long-term survival of nociceptive and autonomic ganglion neurons. This Rattus norvegicus (Rat) protein is Reticulophagy regulator 1.